The following is a 131-amino-acid chain: Profilin-2 (131 aa).

The protein belongs to the profilin family. Occurs in many kinds of cells as a complex with monomeric actin in a 1:1 ratio.

The protein localises to the cytoplasm. It is found in the cytoskeleton. In terms of biological role, binds to actin and affects the structure of the cytoskeleton. At high concentrations, profilin prevents the polymerization of actin, whereas it enhances it at low concentrations. By binding to PIP2, it inhibits the formation of IP3 and DG. In Triticum aestivum (Wheat), this protein is Profilin-2 (PRO2).